Here is a 92-residue protein sequence, read N- to C-terminus: Progonadoliberin-1 (92 aa).

The first 23 residues, 1-23 (MELVPKFLAGLILLTLCVGGCYA), serve as a signal peptide directing secretion. Gln-24 bears the Pyrrolidone carboxylic acid mark. Glycine amide is present on Gly-33.

The protein belongs to the GnRH family.

The protein localises to the secreted. Stimulates the secretion of gonadotropins; it stimulates the secretion of both luteinizing and follicle-stimulating hormones. In Tupaia belangeri (Common tree shrew), this protein is Progonadoliberin-1 (GNRH1).